We begin with the raw amino-acid sequence, 122 residues long: Large ribosomal subunit protein bL17 (122 aa).

The protein belongs to the bacterial ribosomal protein bL17 family. As to quaternary structure, part of the 50S ribosomal subunit. Contacts protein L32.

This chain is Large ribosomal subunit protein bL17, found in Wigglesworthia glossinidia brevipalpis.